A 209-amino-acid polypeptide reads, in one-letter code: Uracil phosphoribosyltransferase (209 aa).

5-phospho-alpha-D-ribose 1-diphosphate-binding positions include Arg-79, Arg-104, and 131–139; that span reads DPMLATGGS. Uracil is bound by residues Ile-194 and 199–201; that span reads GDA. Position 200 (Asp-200) interacts with 5-phospho-alpha-D-ribose 1-diphosphate.

This sequence belongs to the UPRTase family. Mg(2+) is required as a cofactor.

It carries out the reaction UMP + diphosphate = 5-phospho-alpha-D-ribose 1-diphosphate + uracil. Its pathway is pyrimidine metabolism; UMP biosynthesis via salvage pathway; UMP from uracil: step 1/1. Allosterically activated by GTP. In terms of biological role, catalyzes the conversion of uracil and 5-phospho-alpha-D-ribose 1-diphosphate (PRPP) to UMP and diphosphate. This Streptococcus salivarius protein is Uracil phosphoribosyltransferase.